The primary structure comprises 87 residues: Small ribosomal subunit protein bS20 (87 aa).

The disordered stretch occupies residues 1 to 26 (MANIKSAKKRAIQAEKARKHNASRRS).

Belongs to the bacterial ribosomal protein bS20 family.

In terms of biological role, binds directly to 16S ribosomal RNA. This Tolumonas auensis (strain DSM 9187 / NBRC 110442 / TA 4) protein is Small ribosomal subunit protein bS20.